We begin with the raw amino-acid sequence, 493 residues long: MTTVRTRIAPSPTGDPHVGTAYIALFNYCFAKQHGGEFILRIEDTDQLRSTRESEQQIFDALRWLGIEWNEGPDVGGPHGPYRQSERGDIYAKYAKELVDAGHAFYCFCTAEELEQMRAEQQARGETPRYDGRALLLSAEEVQRRLDAGEPHVIRMKVPSEGICVVPDMLRGDVEIPWDRMDMQVLMKNDGLPTYFLANVVDDHLMGITHVLRGEEWLPSAPKLIKLYEYFGWEQPKLCYMPLLRNPDKSKLSKRKNPTSVTFYERMGFMPEAMLNYLGRMGWSMPDEREKFSLAEMVEHFDLSRISLGGPIFDIEKLSWLNGQWLRELPVEEFATRLQKWAFNSDYMMKIAPHVQGRVETFSQVAPLGGFFFEGALKLDAKLFESKKLSADQVRQVIQLILWKLESLRQWEKERITGCIQAVVEALELKLRDAMPLMFAAITGQASSVSVLDAMEILGPDLTRYRLRQALDLLGGVSKKENKEWEKLLASIA.

Positions 10 to 20 (PSPTGDPHVGT) match the 'HIGH' region motif. Residues 251–255 (KLSKR) carry the 'KMSKS' region motif. Lys254 provides a ligand contact to ATP.

It belongs to the class-I aminoacyl-tRNA synthetase family. Glutamate--tRNA ligase type 1 subfamily. Monomer.

The protein resides in the cytoplasm. The catalysed reaction is tRNA(Glu) + L-glutamate + ATP = L-glutamyl-tRNA(Glu) + AMP + diphosphate. Functionally, catalyzes the attachment of glutamate to tRNA(Glu) in a two-step reaction: glutamate is first activated by ATP to form Glu-AMP and then transferred to the acceptor end of tRNA(Glu). This chain is Glutamate--tRNA ligase, found in Pseudomonas putida (strain GB-1).